The following is a 528-amino-acid chain: Phosphoenolpyruvate carboxykinase (ATP) (528 aa).

Residues Arg-56, Tyr-192, and Lys-198 each contribute to the substrate site. ATP is bound by residues Lys-198, His-217, and 233 to 241 (GLSGTGKTT). Lys-198 and His-217 together coordinate Mn(2+). Asp-254 serves as a coordination point for Mn(2+). Glu-282, Arg-319, and Thr-444 together coordinate ATP. Residue Arg-319 coordinates substrate.

Belongs to the phosphoenolpyruvate carboxykinase (ATP) family. It depends on Mn(2+) as a cofactor.

It is found in the cytoplasm. It catalyses the reaction oxaloacetate + ATP = phosphoenolpyruvate + ADP + CO2. It functions in the pathway carbohydrate biosynthesis; gluconeogenesis. In terms of biological role, involved in the gluconeogenesis. Catalyzes the conversion of oxaloacetate (OAA) to phosphoenolpyruvate (PEP) through direct phosphoryl transfer between the nucleoside triphosphate and OAA. The chain is Phosphoenolpyruvate carboxykinase (ATP) from Bacillus mycoides (strain KBAB4) (Bacillus weihenstephanensis).